The sequence spans 244 residues: Demethylmenaquinone methyltransferase (244 aa).

Residues threonine 65, aspartate 86, and 114–115 (DA) contribute to the S-adenosyl-L-methionine site.

It belongs to the class I-like SAM-binding methyltransferase superfamily. MenG/UbiE family.

The catalysed reaction is a 2-demethylmenaquinol + S-adenosyl-L-methionine = a menaquinol + S-adenosyl-L-homocysteine + H(+). It functions in the pathway quinol/quinone metabolism; menaquinone biosynthesis; menaquinol from 1,4-dihydroxy-2-naphthoate: step 2/2. Functionally, methyltransferase required for the conversion of demethylmenaquinol (DMKH2) to menaquinol (MKH2). The protein is Demethylmenaquinone methyltransferase of Lactobacillus johnsonii (strain CNCM I-12250 / La1 / NCC 533).